Here is a 365-residue protein sequence, read N- to C-terminus: Phosphate acyltransferase (365 aa).

The protein belongs to the PlsX family. Homodimer. Probably interacts with PlsY.

Its subcellular location is the cytoplasm. The catalysed reaction is a fatty acyl-[ACP] + phosphate = an acyl phosphate + holo-[ACP]. The protein operates within lipid metabolism; phospholipid metabolism. Its function is as follows. Catalyzes the reversible formation of acyl-phosphate (acyl-PO(4)) from acyl-[acyl-carrier-protein] (acyl-ACP). This enzyme utilizes acyl-ACP as fatty acyl donor, but not acyl-CoA. The sequence is that of Phosphate acyltransferase from Jannaschia sp. (strain CCS1).